The chain runs to 90 residues: MAKASEHFFYVLKCSDNSYYGGYTTDVLRREAEHNAGIRCKYTKTRRPVKVIHFEKFETRSEATKAEAAFKKLSRKNKDAYLIQREEESE.

The region spanning serine 5–alanine 80 is the GIY-YIG domain.

It belongs to the UPF0213 family.

The polypeptide is UPF0213 protein lmo0166 (Listeria monocytogenes serovar 1/2a (strain ATCC BAA-679 / EGD-e)).